The primary structure comprises 845 residues: Protein P (845 aa).

The terminal protein domain (TP) stretch occupies residues 1–179; that stretch reads MPLSYQHFRK…FCGSPYSWEQ (179 aa). Residues 180–348 are spacer; the sequence is ELQHGRLVIK…YCLSHLVNLR (169 aa). The disordered stretch occupies residues 226-246; it reads GLQPHQGPLASSQPGRSGSIR. The tract at residues 349–692 is polymerase/reverse transcriptase domain (RT); that stretch reads EDRGPCDEHG…YMNLYPVARQ (344 aa). Residues 359-602 form the Reverse transcriptase domain; that stretch reads EHHIRIPRTP…YSLNFMGYVI (244 aa). D431, D553, and D554 together coordinate Mg(2+).

Belongs to the hepadnaviridae P protein family.

The enzyme catalyses DNA(n) + a 2'-deoxyribonucleoside 5'-triphosphate = DNA(n+1) + diphosphate. It catalyses the reaction Endonucleolytic cleavage to 5'-phosphomonoester.. Activated by host HSP70 and HSP40 in vitro to be able to bind the epsilon loop of the pgRNA. Because deletion of the RNase H region renders the protein partly chaperone-independent, the chaperones may be needed indirectly to relieve occlusion of the RNA-binding site by this domain. Inhibited by several reverse-transcriptase inhibitors: Lamivudine, Adefovir and Entecavir. In terms of biological role, multifunctional enzyme that converts the viral RNA genome into dsDNA in viral cytoplasmic capsids. This enzyme displays a DNA polymerase activity that can copy either DNA or RNA templates, and a ribonuclease H (RNase H) activity that cleaves the RNA strand of RNA-DNA heteroduplexes in a partially processive 3'- to 5'-endonucleasic mode. Neo-synthesized pregenomic RNA (pgRNA) are encapsidated together with the P protein, and reverse-transcribed inside the nucleocapsid. Initiation of reverse-transcription occurs first by binding the epsilon loop on the pgRNA genome, and is initiated by protein priming, thereby the 5'-end of (-)DNA is covalently linked to P protein. Partial (+)DNA is synthesized from the (-)DNA template and generates the relaxed circular DNA (RC-DNA) genome. After budding and infection, the RC-DNA migrates in the nucleus, and is converted into a plasmid-like covalently closed circular DNA (cccDNA). The activity of P protein does not seem to be necessary for cccDNA generation, and is presumably released from (+)DNA by host nuclear DNA repair machinery. This Hepatitis B virus genotype A2 subtype adw2 (isolate Germany/991/1990) (HBV-A) protein is Protein P.